A 346-amino-acid chain; its full sequence is S-adenosylmethionine:tRNA ribosyltransferase-isomerase (346 aa).

This sequence belongs to the QueA family. Monomer.

The protein localises to the cytoplasm. It carries out the reaction 7-aminomethyl-7-carbaguanosine(34) in tRNA + S-adenosyl-L-methionine = epoxyqueuosine(34) in tRNA + adenine + L-methionine + 2 H(+). The protein operates within tRNA modification; tRNA-queuosine biosynthesis. Its function is as follows. Transfers and isomerizes the ribose moiety from AdoMet to the 7-aminomethyl group of 7-deazaguanine (preQ1-tRNA) to give epoxyqueuosine (oQ-tRNA). The sequence is that of S-adenosylmethionine:tRNA ribosyltransferase-isomerase from Chloroherpeton thalassium (strain ATCC 35110 / GB-78).